The sequence spans 392 residues: Anhydro-N-acetylmuramic acid kinase (392 aa).

22–29 (GTSMDGVD) provides a ligand contact to ATP.

Belongs to the anhydro-N-acetylmuramic acid kinase family.

It catalyses the reaction 1,6-anhydro-N-acetyl-beta-muramate + ATP + H2O = N-acetyl-D-muramate 6-phosphate + ADP + H(+). It functions in the pathway amino-sugar metabolism; 1,6-anhydro-N-acetylmuramate degradation. The protein operates within cell wall biogenesis; peptidoglycan recycling. Functionally, catalyzes the specific phosphorylation of 1,6-anhydro-N-acetylmuramic acid (anhMurNAc) with the simultaneous cleavage of the 1,6-anhydro ring, generating MurNAc-6-P. Is required for the utilization of anhMurNAc either imported from the medium or derived from its own cell wall murein, and thus plays a role in cell wall recycling. The sequence is that of Anhydro-N-acetylmuramic acid kinase from Burkholderia pseudomallei (strain 1106a).